The chain runs to 220 residues: Uracil-DNA glycosylase (220 aa).

The active-site Proton acceptor is the D65.

The protein belongs to the uracil-DNA glycosylase (UDG) superfamily. UNG family.

The protein localises to the cytoplasm. It carries out the reaction Hydrolyzes single-stranded DNA or mismatched double-stranded DNA and polynucleotides, releasing free uracil.. Excises uracil residues from the DNA which can arise as a result of misincorporation of dUMP residues by DNA polymerase or due to deamination of cytosine. This is Uracil-DNA glycosylase from Azobacteroides pseudotrichonymphae genomovar. CFP2.